A 471-amino-acid polypeptide reads, in one-letter code: Amidophosphoribosyltransferase (471 aa).

Residue Cys-2 is the Nucleophile of the active site. The Glutamine amidotransferase type-2 domain occupies 2 to 224 (CGIFGIYSYE…PGEIIEIKDG (223 aa)). A [4Fe-4S] cluster-binding site is contributed by Cys-255. Positions 302, 364, and 365 each coordinate Mg(2+). Residues Cys-401, Cys-450, and Cys-453 each coordinate [4Fe-4S] cluster.

The protein in the C-terminal section; belongs to the purine/pyrimidine phosphoribosyltransferase family. Requires Mg(2+) as cofactor. It depends on [4Fe-4S] cluster as a cofactor.

It carries out the reaction 5-phospho-beta-D-ribosylamine + L-glutamate + diphosphate = 5-phospho-alpha-D-ribose 1-diphosphate + L-glutamine + H2O. It functions in the pathway purine metabolism; IMP biosynthesis via de novo pathway; N(1)-(5-phospho-D-ribosyl)glycinamide from 5-phospho-alpha-D-ribose 1-diphosphate: step 1/2. Catalyzes the formation of phosphoribosylamine from phosphoribosylpyrophosphate (PRPP) and glutamine. The sequence is that of Amidophosphoribosyltransferase from Methanocaldococcus jannaschii (strain ATCC 43067 / DSM 2661 / JAL-1 / JCM 10045 / NBRC 100440) (Methanococcus jannaschii).